Reading from the N-terminus, the 482-residue chain is Coagulation factor X (482 aa).

Positions Met-1–Pro-20 are cleaved as a signal peptide. Positions Gly-21 to Arg-40 are excised as a propeptide. The Gla domain maps to Ala-41–Glu-85. 4-carboxyglutamate is present on residues Glu-46, Glu-47, Glu-54, Glu-56, Glu-59, Glu-60, Glu-65, Glu-66, Glu-69, Glu-72, Glu-75, and Glu-79. A disulfide bond links Cys-57 and Cys-62. An EGF-like 1; calcium-binding domain is found at Asp-86–Glu-122. Cystine bridges form between Cys-90/Cys-101, Cys-95/Cys-110, Cys-112/Cys-121, Cys-129/Cys-140, Cys-136/Cys-149, Cys-151/Cys-164, Cys-172/Cys-340, Cys-238/Cys-243, Cys-259/Cys-275, Cys-388/Cys-402, and Cys-413/Cys-441. The residue at position 103 (Asp-103) is a (3R)-3-hydroxyaspartate. Residues Val-125–Leu-165 enclose the EGF-like 2 domain. The propeptide at Val-184–Arg-231 is activation peptide. 2 N-linked (GlcNAc...) asparagine glycosylation sites follow: Asn-187 and Asn-218. The Peptidase S1 domain maps to Ile-232–Lys-465. Catalysis depends on charge relay system residues His-274 and Asp-320. Ser-417 acts as the Charge relay system in catalysis.

The protein belongs to the peptidase S1 family. In terms of assembly, the two chains are formed from a single-chain precursor by the excision of two Arg residues and are held together by 1 or more disulfide bonds. Forms a heterodimer with SERPINA5. Interacts with ixolaris, an anticoagulant protein from Ixodes scapularis saliva. In terms of processing, the vitamin K-dependent, enzymatic carboxylation of some glutamate residues allows the modified protein to bind calcium. N- and O-glycosylated. Post-translationally, proteolytically cleaved and activated by cathepsin CTSG. The activation peptide is cleaved by factor IXa (in the intrinsic pathway), or by factor VIIa (in the extrinsic pathway). In terms of processing, the iron and 2-oxoglutarate dependent 3-hydroxylation of aspartate and asparagine is (R) stereospecific within EGF domains. In terms of tissue distribution, plasma; synthesized in the liver.

Its subcellular location is the secreted. The enzyme catalyses Selective cleavage of Arg-|-Thr and then Arg-|-Ile bonds in prothrombin to form thrombin.. Inhibited by SERPINA5. In terms of biological role, factor Xa is a vitamin K-dependent glycoprotein that converts prothrombin to thrombin in the presence of factor Va, calcium and phospholipid during blood clotting. Factor Xa activates pro-inflammatory signaling pathways in a protease-activated receptor (PAR)-dependent manner. The protein is Coagulation factor X (F10) of Rattus norvegicus (Rat).